A 95-amino-acid chain; its full sequence is MLHTLPHCASSVDFPALLRLLKEGDALLLLQDGVTVAIEGNRFLESLRDAPITVYALKEDIDARGLGGQISDSVVRVDYTEFVRLTVKYANQMAW.

It belongs to the DsrH/TusB family. As to quaternary structure, heterohexamer, formed by a dimer of trimers. The hexameric TusBCD complex contains 2 copies each of TusB, TusC and TusD. The TusBCD complex interacts with TusE.

Its subcellular location is the cytoplasm. Functionally, part of a sulfur-relay system required for 2-thiolation of 5-methylaminomethyl-2-thiouridine (mnm(5)s(2)U) at tRNA wobble positions. The protein is Protein TusB of Salmonella arizonae (strain ATCC BAA-731 / CDC346-86 / RSK2980).